Reading from the N-terminus, the 138-residue chain is Basic phospholipase A2 sistruxin B (138 aa).

A signal peptide spans 1–16 (MRALWIVAVLLVGVEG). Cystine bridges form between Cys42/Cys131, Cys44/Cys60, Cys59/Cys111, Cys65/Cys138, Cys66/Cys104, Cys73/Cys97, and Cys91/Cys102. Ca(2+) is bound by residues Tyr43, Gly45, and Gly47. Residue His63 is part of the active site. Asp64 serves as a coordination point for Ca(2+). The active site involves Asp105.

In terms of assembly, heterodimer of an acidic subunit and a basic chain. The acidic subunit is non-toxic, without enzymatic activity and comprises 3 peptides that are cross-linked by 7 disulfide bridges. The basic subunit is toxic, has phospholipase A2 activity and is composed of a single chain. Ca(2+) serves as cofactor. In terms of tissue distribution, expressed by the venom gland.

It is found in the secreted. It catalyses the reaction a 1,2-diacyl-sn-glycero-3-phosphocholine + H2O = a 1-acyl-sn-glycero-3-phosphocholine + a fatty acid + H(+). Its function is as follows. Snake venom phospholipase A2 (PLA2) that shows presynaptic neurotoxicity. PLA2 catalyzes the calcium-dependent hydrolysis of the 2-acyl groups in 3-sn-phosphoglycerides. The polypeptide is Basic phospholipase A2 sistruxin B (Sistrurus tergeminus (Western massasauga)).